The primary structure comprises 245 residues: 5'-nucleotidase SurE (245 aa).

Residues D8, D9, S39, and N91 each coordinate a divalent metal cation.

Belongs to the SurE nucleotidase family. Requires a divalent metal cation as cofactor.

It is found in the cytoplasm. The enzyme catalyses a ribonucleoside 5'-phosphate + H2O = a ribonucleoside + phosphate. In terms of biological role, nucleotidase that shows phosphatase activity on nucleoside 5'-monophosphates. The polypeptide is 5'-nucleotidase SurE (Psychromonas ingrahamii (strain DSM 17664 / CCUG 51855 / 37)).